Here is a 387-residue protein sequence, read N- to C-terminus: Phosphoglycerate kinase (387 aa).

Substrate is bound by residues 21–23 (DLN), Arg-36, 59–62 (HLGR), Arg-113, and Arg-146. ATP contacts are provided by residues Lys-197, Glu-314, and 340-343 (GGDT).

The protein belongs to the phosphoglycerate kinase family. As to quaternary structure, monomer.

The protein resides in the cytoplasm. It carries out the reaction (2R)-3-phosphoglycerate + ATP = (2R)-3-phospho-glyceroyl phosphate + ADP. The protein operates within carbohydrate degradation; glycolysis; pyruvate from D-glyceraldehyde 3-phosphate: step 2/5. The polypeptide is Phosphoglycerate kinase (Pseudomonas putida (strain ATCC 700007 / DSM 6899 / JCM 31910 / BCRC 17059 / LMG 24140 / F1)).